We begin with the raw amino-acid sequence, 299 residues long: Dihydroorotate dehydrogenase B (NAD(+)), catalytic subunit (299 aa).

FMN is bound by residues Ser21 and 44–45; that span reads KS. Residues Lys44, 68-72, and Asn125 contribute to the substrate site; that span reads NAVGL. An FMN-binding site is contributed by Asn125. The Nucleophile role is filled by Cys128. Lys163 is a binding site for FMN. 189–190 is a substrate binding site; sequence NT. FMN contacts are provided by residues Gly214, 240-241, and 262-263; these read GG and GS.

This sequence belongs to the dihydroorotate dehydrogenase family. Type 1 subfamily. Heterotetramer of 2 PyrK and 2 PyrD type B subunits. Requires FMN as cofactor.

It is found in the cytoplasm. The catalysed reaction is (S)-dihydroorotate + NAD(+) = orotate + NADH + H(+). It functions in the pathway pyrimidine metabolism; UMP biosynthesis via de novo pathway; orotate from (S)-dihydroorotate (NAD(+) route): step 1/1. In terms of biological role, catalyzes the conversion of dihydroorotate to orotate with NAD(+) as electron acceptor. This is Dihydroorotate dehydrogenase B (NAD(+)), catalytic subunit (pyrD) from Archaeoglobus fulgidus (strain ATCC 49558 / DSM 4304 / JCM 9628 / NBRC 100126 / VC-16).